Consider the following 164-residue polypeptide: SsrA-binding protein (164 aa).

The protein belongs to the SmpB family.

Its subcellular location is the cytoplasm. Its function is as follows. Required for rescue of stalled ribosomes mediated by trans-translation. Binds to transfer-messenger RNA (tmRNA), required for stable association of tmRNA with ribosomes. tmRNA and SmpB together mimic tRNA shape, replacing the anticodon stem-loop with SmpB. tmRNA is encoded by the ssrA gene; the 2 termini fold to resemble tRNA(Ala) and it encodes a 'tag peptide', a short internal open reading frame. During trans-translation Ala-aminoacylated tmRNA acts like a tRNA, entering the A-site of stalled ribosomes, displacing the stalled mRNA. The ribosome then switches to translate the ORF on the tmRNA; the nascent peptide is terminated with the 'tag peptide' encoded by the tmRNA and targeted for degradation. The ribosome is freed to recommence translation, which seems to be the essential function of trans-translation. The sequence is that of SsrA-binding protein from Shewanella woodyi (strain ATCC 51908 / MS32).